Reading from the N-terminus, the 269-residue chain is Embryonic polyadenylate-binding protein 2 (269 aa).

Positions 26–54 (EAQGWGAWGRTEKTSLVPSAGSDKEAEEN) are disordered. The RRM domain maps to 139–216 (RSVYVGNVDY…RVIKVLPKRT (78 aa)). The disordered stretch occupies residues 240 to 269 (LQGSLQRKPRLRPHGQSRGRGRASPWFSPY). Residues 246–260 (RKPRLRPHGQSRGRG) show a composition bias toward basic residues.

Its subcellular location is the cytoplasm. Its function is as follows. Binds the poly(A) tail of mRNA. In Rattus norvegicus (Rat), this protein is Embryonic polyadenylate-binding protein 2 (Pabpn1l).